The following is a 72-amino-acid chain: Prokaryotic ubiquitin-like protein Pup (72 aa).

Over residues 1-10 (MATKDTGGGQ) the composition is skewed to gly residues. The interval 1 to 45 (MATKDTGGGQQKATRNTEEVEEQAQDAQASEDLKERQEKLSDDVD) is disordered. The stretch at 9–60 (GQQKATRNTEEVEEQAQDAQASEDLKERQEKLSDDVDSVLDEIDDVLEENAE) forms a coiled coil. The interval 28–66 (QASEDLKERQEKLSDDVDSVLDEIDDVLEENAEDFVRSF) is ARC ATPase binding. Positions 31–42 (EDLKERQEKLSD) are enriched in basic and acidic residues. An Isoglutamyl lysine isopeptide (Glu-Lys) (interchain with K-? in acceptor proteins) cross-link involves residue glutamate 72.

The protein belongs to the prokaryotic ubiquitin-like protein family. Strongly interacts with the proteasome-associated ATPase ARC through a hydrophobic interface; the interacting region of Pup lies in its C-terminal half. There is one Pup binding site per ARC hexamer ring.

The protein operates within protein degradation; proteasomal Pup-dependent pathway. Its function is as follows. Protein modifier that is covalently attached to lysine residues of substrate proteins, thereby targeting them for proteasomal degradation. The tagging system is termed pupylation. The chain is Prokaryotic ubiquitin-like protein Pup from Streptomyces avermitilis (strain ATCC 31267 / DSM 46492 / JCM 5070 / NBRC 14893 / NCIMB 12804 / NRRL 8165 / MA-4680).